The primary structure comprises 528 residues: Probable rhamnogalacturonate lyase A (528 aa).

The signal sequence occupies residues 1–20 (MLSKATLLLFLPSWARVTYA). N-linked (GlcNAc...) asparagine glycosylation occurs at Asn46. A disulfide bridge connects residues Cys50 and Cys93. Asn148 is a glycosylation site (N-linked (GlcNAc...) asparagine). Residues Cys184 and Cys193 are joined by a disulfide bond. The N-linked (GlcNAc...) asparagine glycan is linked to Asn351.

It belongs to the polysaccharide lyase 4 family.

Its subcellular location is the secreted. The catalysed reaction is Endotype eliminative cleavage of L-alpha-rhamnopyranosyl-(1-&gt;4)-alpha-D-galactopyranosyluronic acid bonds of rhamnogalacturonan I domains in ramified hairy regions of pectin leaving L-rhamnopyranose at the reducing end and 4-deoxy-4,5-unsaturated D-galactopyranosyluronic acid at the non-reducing end.. In terms of biological role, pectinolytic enzymes consist of four classes of enzymes: pectin lyase, polygalacturonase, pectin methylesterase and rhamnogalacturonase. Degrades the rhamnogalacturonan I (RG-I) backbone of pectin. This is Probable rhamnogalacturonate lyase A (rglA) from Aspergillus fumigatus (strain CBS 144.89 / FGSC A1163 / CEA10) (Neosartorya fumigata).